The following is a 178-amino-acid chain: MKIALSGKSGCGNTTVSSMIAKHYGLEFINYTFHDIARERNIPFSEFYEKEIIGRDDYYWDMYLDKRLSLLSKKNNTVLASRLAIWISKSADLKIYLYAKMEVRAERIMTREGGMYSDVLSSTFNRDENDKKRYLSIYNIDIDDYSSKTDLVIDVTNINSNEVFELIRDEIDKRNLKN.

An ATP-binding site is contributed by glycine 7–threonine 15.

The protein belongs to the cytidylate kinase family. Type 2 subfamily.

Its subcellular location is the cytoplasm. The catalysed reaction is CMP + ATP = CDP + ADP. It catalyses the reaction dCMP + ATP = dCDP + ADP. This Borrelia garinii subsp. bavariensis (strain ATCC BAA-2496 / DSM 23469 / PBi) (Borreliella bavariensis) protein is Cytidylate kinase 2.